Reading from the N-terminus, the 305-residue chain is Putative glutamine amidotransferase MTH_191 (305 aa).

Cys-2 is an active-site residue. Positions Cys-2 to Ile-305 constitute a Glutamine amidotransferase type-2 domain.

The chain is Putative glutamine amidotransferase MTH_191 from Methanothermobacter thermautotrophicus (strain ATCC 29096 / DSM 1053 / JCM 10044 / NBRC 100330 / Delta H) (Methanobacterium thermoautotrophicum).